Reading from the N-terminus, the 328-residue chain is D-cysteine desulfhydrase (328 aa).

Position 51 is an N6-(pyridoxal phosphate)lysine (lysine 51).

This sequence belongs to the ACC deaminase/D-cysteine desulfhydrase family. In terms of assembly, homodimer. Pyridoxal 5'-phosphate is required as a cofactor.

The enzyme catalyses D-cysteine + H2O = hydrogen sulfide + pyruvate + NH4(+) + H(+). Its function is as follows. Catalyzes the alpha,beta-elimination reaction of D-cysteine and of several D-cysteine derivatives. It could be a defense mechanism against D-cysteine. The sequence is that of D-cysteine desulfhydrase from Salmonella typhimurium (strain LT2 / SGSC1412 / ATCC 700720).